The chain runs to 472 residues: Bone morphogenetic protein 3 (472 aa).

The N-terminal stretch at 1 to 22 (MAGASRLLFLWLGCFCVSLAQG) is a signal peptide. The propeptide occupies 23 to 362 (ERPKPPFPEL…EQTLKKARRK (340 aa)). The segment covering 27 to 37 (PPFPELRKAVP) has biased composition (basic and acidic residues). The segment at 27-53 (PPFPELRKAVPGDRTAGGGPDSELQPQ) is disordered. N-linked (GlcNAc...) asparagine glycans are attached at residues asparagine 117, asparagine 141, asparagine 175, and asparagine 220. Residues 320-350 (PYKTLQAQAPEKSKNKKKQRKGPHRKSQTLQ) form a disordered region. Positions 333 to 346 (KNKKKQRKGPHRKS) are enriched in basic residues. 3 cysteine pairs are disulfide-bonded: cysteine 370–cysteine 437, cysteine 399–cysteine 469, and cysteine 403–cysteine 471. Residue asparagine 463 is glycosylated (N-linked (GlcNAc...) asparagine).

Belongs to the TGF-beta family. Homodimer; disulfide-linked. Interacts with type II receptor ACVR2B. Expressed in adult and fetal cartilage.

The protein localises to the secreted. Its function is as follows. Growth factor of the TGF-beta superfamily that plays an essential role in developmental process by inducing and patterning early skeletal formation and by negatively regulating bone density. Antagonizes the ability of certain osteogenic BMPs to induce osteoprogenitor differentiation and ossification. Initiates signaling cascades by associating with type II receptor ACVR2B to activate SMAD2-dependent and SMAD-independent signaling cascades including TAK1 and JNK pathways. The chain is Bone morphogenetic protein 3 (BMP3) from Homo sapiens (Human).